We begin with the raw amino-acid sequence, 206 residues long: LexA repressor (206 aa).

A DNA-binding region (H-T-H motif) is located at residues 28-48 (RAEIATRLGFKSANAAEEHLK). Catalysis depends on for autocatalytic cleavage activity residues S123 and K160.

This sequence belongs to the peptidase S24 family. In terms of assembly, homodimer.

The enzyme catalyses Hydrolysis of Ala-|-Gly bond in repressor LexA.. In terms of biological role, represses a number of genes involved in the response to DNA damage (SOS response), including recA and lexA. In the presence of single-stranded DNA, RecA interacts with LexA causing an autocatalytic cleavage which disrupts the DNA-binding part of LexA, leading to derepression of the SOS regulon and eventually DNA repair. The sequence is that of LexA repressor from Shewanella putrefaciens (strain CN-32 / ATCC BAA-453).